Consider the following 149-residue polypeptide: Cell division protein SepF (149 aa).

Residues 12–57 form a disordered region; the sequence is SNEEDDYYEEDGYEQSQQQEQQTTQQTSSQPRFVRQTTQSQTPAGL. Residues 13–24 show a composition bias toward acidic residues; that stretch reads NEEDDYYEEDGY. Low complexity predominate over residues 25-41; that stretch reads EQSQQQEQQTTQQTSSQ. Polar residues predominate over residues 46–57; that stretch reads RQTTQSQTPAGL.

This sequence belongs to the SepF family. As to quaternary structure, homodimer. Interacts with FtsZ.

It localises to the cytoplasm. In terms of biological role, cell division protein that is part of the divisome complex and is recruited early to the Z-ring. Probably stimulates Z-ring formation, perhaps through the cross-linking of FtsZ protofilaments. Its function overlaps with FtsA. The protein is Cell division protein SepF of Leuconostoc mesenteroides subsp. mesenteroides (strain ATCC 8293 / DSM 20343 / BCRC 11652 / CCM 1803 / JCM 6124 / NCDO 523 / NBRC 100496 / NCIMB 8023 / NCTC 12954 / NRRL B-1118 / 37Y).